Here is a 286-residue protein sequence, read N- to C-terminus: NFU1 iron-sulfur cluster scaffold homolog, mitochondrial (286 aa).

The transit peptide at 1 to 66 (MSKLLTNTAL…RQIQLSGARN (66 aa)) directs the protein to the mitochondrion. The segment at 182–250 (IKELLDTRIR…IPEVESVEQV (69 aa)) is nifU. 2 residues coordinate [4Fe-4S] cluster: Cys-219 and Cys-222.

This sequence belongs to the NifU family.

Its subcellular location is the mitochondrion. Molecular scaffold for [Fe-S] cluster assembly of mitochondrial iron-sulfur proteins. The chain is NFU1 iron-sulfur cluster scaffold homolog, mitochondrial from Drosophila ananassae (Fruit fly).